The primary structure comprises 448 residues: CCA-adding enzyme (448 aa).

ATP-binding residues include serine 52 and lysine 55. The CTP site is built by serine 52 and lysine 55. Positions 64, 66, and 118 each coordinate Mg(2+). Residues histidine 141, lysine 160, and tyrosine 169 each coordinate ATP. 3 residues coordinate CTP: histidine 141, lysine 160, and tyrosine 169.

The protein belongs to the tRNA nucleotidyltransferase/poly(A) polymerase family. Archaeal CCA-adding enzyme subfamily. Homodimer. The cofactor is Mg(2+).

The enzyme catalyses a tRNA precursor + 2 CTP + ATP = a tRNA with a 3' CCA end + 3 diphosphate. The catalysed reaction is a tRNA with a 3' CCA end + 2 CTP + ATP = a tRNA with a 3' CCACCA end + 3 diphosphate. Catalyzes the addition and repair of the essential 3'-terminal CCA sequence in tRNAs without using a nucleic acid template. Adds these three nucleotides in the order of C, C, and A to the tRNA nucleotide-73, using CTP and ATP as substrates and producing inorganic pyrophosphate. tRNA 3'-terminal CCA addition is required both for tRNA processing and repair. Also involved in tRNA surveillance by mediating tandem CCA addition to generate a CCACCA at the 3' terminus of unstable tRNAs. While stable tRNAs receive only 3'-terminal CCA, unstable tRNAs are marked with CCACCA and rapidly degraded. The polypeptide is CCA-adding enzyme (Pyrococcus abyssi (strain GE5 / Orsay)).